Consider the following 704-residue polypeptide: Zinc finger protein MSN2 (704 aa).

A disordered region spans residues 84–246 (PSTTDNSLHL…SISNSNSNST (163 aa)). A compositionally biased stretch (basic and acidic residues) spans 91–112 (LHLKADSNKNRDARTIENDSEI). The span at 113 to 133 (KSTNNASGSGANQYTTLTSPY) shows a compositional bias: polar residues. A compositionally biased stretch (low complexity) spans 141–166 (NMNNPLQSPSPSSVPQNPTINPPINT). Composition is skewed to polar residues over residues 167–193 (ASNE…QQHT) and 204–220 (NGAN…NNLN). A compositionally biased stretch (low complexity) spans 228-246 (NSDTNSYSNSISNSNSNST). The short motif at 261-269 (SMLDDYVSS) is the 9aaTAD element. 2 positions are modified to phosphoserine: S288 and S304. The disordered stretch occupies residues 418–437 (NRVQHKQLTSSHNNSSTNMK). The span at 426 to 437 (TSSHNNSSTNMK) shows a compositional bias: polar residues. Residues S451 and S582 each carry the phosphoserine modification. Positions 592 to 634 (LTNQQNNISSSSVNSTGNGAGVTKERRPSYRRKSMTPSRRSSV) are disordered. The segment covering 593–608 (TNQQNNISSSSVNSTG) has biased composition (low complexity). S633 carries the phosphoserine modification. 2 consecutive C2H2-type zinc fingers follow at residues 647–665 (FHCH…LKRH) and 676–698 (FACH…IKTH).

As to quaternary structure, interacts with WHI2.

It is found in the cytoplasm. It localises to the nucleus. Functionally, positive transcriptional factor that acts as a component of the stress responsive system. Recognizes and binds to the stress response element (STRE) which is involved in the response to various forms of stress (heat, oxidative, osmotic, etc.). Involved in the regulation of the CTT1, DDR2, HSP12 genes. May be regulated via WHI2-PSR1 complex phosphatase activity. This is Zinc finger protein MSN2 (MSN2) from Saccharomyces cerevisiae (strain ATCC 204508 / S288c) (Baker's yeast).